The following is a 561-amino-acid chain: MEDLTKNIIFTNAINGQPATIQYQTADGTILKQPKIEGQKTEQQPTFYYTTNGNGGTVNLAQLATTDDNKTCYIAQPVGGYNYALVNGMPLNQGAALGIATVDAQGRIQIVNQNKPIAANTISNISFKCDVCSDMFPHLALLNAHKRMHTDGEQQQQQQHNAQAGGDSIAVVSAQGLVQAQNIIGNGQMGQIQIVSSDTLEPVQQSVMQQQQHESKASKCINCGSSMLQQSKRKGPKQVRCESCMQAEQTAQQQQQLFVAQDGQMAHPVQIISTTPQAQAQLQQIVAAQTGGTTPKREASSGSGHHPVKKRNSQQMTKCQKCNGSGVVLVGQHSHASHSGVGGSVKQSVTVKTENPSKPFSCNICGGLFSRYSSLWSHKKLHSGEKNYKCSICGLAFAKAVYLKNHARIHTGEKPYKCQTCGMQFSQSPHLKNHERTHSGERPYVCGVCDKGFARHATLWNHRRIHTGEKPYKCEICGSAFSQAAHLKNHAKVHSGEKPYKCEICSAAFADRFALKRHRGIHQKYGQTAPRQTSSDGMIVHKQEIPDMEDEAQQEVIIGGL.

The C2H2-type 1 zinc finger occupies 127 to 149 (FKCDVCSDMFPHLALLNAHKRMH). Residues C129, C132, H145, and H149 each contribute to the Zn(2+) site. A disordered region spans residues 290 to 315 (TGGTTPKREASSGSGHHPVKKRNSQQ). C2H2-type zinc fingers lie at residues 360–382 (FSCNICGGLFSRYSSLWSHKKLH), 388–410 (YKCSICGLAFAKAVYLKNHARIH), 416–438 (YKCQTCGMQFSQSPHLKNHERTH), 444–466 (YVCGVCDKGFARHATLWNHRRIH), 472–494 (YKCEICGSAFSQAAHLKNHAKVH), and 500–522 (YKCEICSAAFADRFALKRHRGIH).

Homodimer. Interacts with msl-2; promoting recruitment of the male-specific lethal (MSL) histone acetyltransferase complex to chromatin. Interacts with Nelf-A. Interacts with NELF-B.

The protein resides in the nucleus. Its subcellular location is the chromosome. Its function is as follows. Transcription factor involved in X-chromosome dosage compensation in males, the process by which transcription of the single X chromosome in the male is elevated. Binds to the DNA sequence (GA)n. Clamp-binding promotes nucleosome depletion and chromatin accessibility, thereby allowing access to other transcription factors. Specifically binds to cis-acting elements on the X-chromosome named chromatin entry sites and promotes recruitment of the male-specific lethal (MSL) histone acetyltransferase complex, which associates with actively transcribed genes on the male X-chromosome to upregulate their expression. Mechanistically, acts by promoting chromatin accessibility at chromatin entry sites, facilitating DNA-binding of msl-2, followed by MSL complex recruitment. In addition to dosage compensation, also involved in zygotic genome activation (ZGA), a critical event in early embryonic development during which the developmental control passes from maternally provided mRNAs to the expression of the zygotic genome after fertilization. Maternally-provided protein cooperates with Zelda (zld) to activate zygotic transcription by increasing chromatin accessibility at promoters of specific genes and facilitate zld occupancy at a subset of key embryonic promoters. Also acts as an activator of gypsy chromatin insulator function by promoting binding of Cp190 to chromatin. The protein is Transcription factor Clamp of Drosophila melanogaster (Fruit fly).